The primary structure comprises 226 residues: MGIRAIVVDTAGTTTDLNFIQDVLFPYSVKALPDFLEQNQHNVLVENCICDTKDIALEPEADLARVTEILQQWVNEDRKATPLKTLQGLIWKQGYAHGEFKGHIFPDFIEAVKRFSAQNLRIYSFSSGSVDAQKLLFSHSDGGDLTEMFNGHFDTRTGNKLDKQAYCNILNTISLSPKQVLFVSDVIEELKAADAAGMMTCQMVRDSKQRTGEFHKISSFDELLIE.

This sequence belongs to the HAD-like hydrolase superfamily. MasA/MtnC family. As to quaternary structure, monomer. The cofactor is Mg(2+).

The enzyme catalyses 5-methylsulfanyl-2,3-dioxopentyl phosphate + H2O = 1,2-dihydroxy-5-(methylsulfanyl)pent-1-en-3-one + phosphate. It functions in the pathway amino-acid biosynthesis; L-methionine biosynthesis via salvage pathway; L-methionine from S-methyl-5-thio-alpha-D-ribose 1-phosphate: step 3/6. Its pathway is amino-acid biosynthesis; L-methionine biosynthesis via salvage pathway; L-methionine from S-methyl-5-thio-alpha-D-ribose 1-phosphate: step 4/6. Its function is as follows. Bifunctional enzyme that catalyzes the enolization of 2,3-diketo-5-methylthiopentyl-1-phosphate (DK-MTP-1-P) into the intermediate 2-hydroxy-3-keto-5-methylthiopentenyl-1-phosphate (HK-MTPenyl-1-P), which is then dephosphorylated to form the acireductone 1,2-dihydroxy-3-keto-5-methylthiopentene (DHK-MTPene). This is Enolase-phosphatase E1 from Shewanella sp. (strain W3-18-1).